Here is a 608-residue protein sequence, read N- to C-terminus: Nuclear receptor subfamily 2 group C member 1 (608 aa).

The tract at residues methionine 1–methionine 179 is required for interaction with KAT2B. Positions phenylalanine 111–cysteine 186 form a DNA-binding region, nuclear receptor. 2 NR C4-type zinc fingers span residues cysteine 114–cysteine 134 and cysteine 150–cysteine 169. Phosphoserine is present on residues serine 198 and serine 216. Position 221 is a phosphothreonine (threonine 221). Threonine 223 is modified (phosphothreonine; by MAPK1). Lysine 251 participates in a covalent cross-link: Glycyl lysine isopeptide (Lys-Gly) (interchain with G-Cter in SUMO); alternate. Residue lysine 251 forms a Glycyl lysine isopeptide (Lys-Gly) (interchain with G-Cter in SUMO2); alternate linkage. The NR LBD domain maps to glycine 353–glutamate 595. Serine 586 carries the post-translational modification Phosphoserine; by PKC. The required for interaction with NRIP1 stretch occupies residues proline 589–isoleucine 608. Lysine 593 participates in a covalent cross-link: Glycyl lysine isopeptide (Lys-Gly) (interchain with G-Cter in SUMO2).

This sequence belongs to the nuclear hormone receptor family. NR2 subfamily. In terms of assembly, homodimer. Heterodimer; with NR2C2 which is required for chromatin remodeling and for binding to promoter regions such as globin DR1 repeats. Interacts with ESR1; the interaction prevents homodimerization of ESR1 and suppresses its transcriptional activity and cell growth. Interacts with NRIP1 (via its LXXLL motifs); the interaction provides corepressor activity. Interacts with HDAC3 (via the DNA-binding domain); the interaction recruits phosphorylated NR2C1 to PML bodies for sumoylation. Interacts with HDAC4 (via the DNA-binding domain). Interacts with PIAS1; the interaction is required for sumoylation of NR2C1. Interacts with UBE2I; the interaction is required for sumoylation of NR2C1. Interacts with KAT2B; the interaction acts as a corepressor of gene expression. Post-translationally, sumoylation requires both PIAS1 and UBE2I. Sumoylation appears to dissociate NR2C1 from the PML nuclear bodies. Enhances the interaction with NRIP1 but inhibits interaction with KAT2B. In proliferating cells, stimulation by all-trans retinoic acid, activation of MAPK1-mediated phosphorylation and recruitment to PML bodies with subsequent sumoylation, suppresses OCT4 expression. In terms of processing, phosphorylated on several serine and threonine residues. Phosphorylation on Thr-223, stimulated by all-trans retinoic acid (atRA) mediates PML location and sumoylation in proliferating cells which then modulates its association with effector molecules, KAT2B and NRIP1. Phosphorylation on Ser-586 by PKC is important for protein stability and function as activator of RARB.

It is found in the nucleus. The protein localises to the PML body. Orphan nuclear receptor. Binds the IR7 element in the promoter of its own gene in an autoregulatory negative feedback mechanism. Primarily repressor of a broad range of genes including ESR1 and RARB. Together with NR2C2, forms the core of the DRED (direct repeat erythroid-definitive) complex that represses embryonic and fetal globin transcription. Binds to hormone response elements (HREs) consisting of two 5'-AGGTCA-3' half site direct repeat consensus sequences. Also activator of OCT4 gene expression. Plays a fundamental role in early embryogenesis and regulates embryonic stem cell proliferation and differentiation. Mediator of retinoic acid-regulated preadipocyte proliferation. This chain is Nuclear receptor subfamily 2 group C member 1 (NR2C1), found in Bos taurus (Bovine).